Here is a 57-residue protein sequence, read N- to C-terminus: COP9 signalosome complex subunit 9 (57 aa).

Residue Thr-26 is modified to Phosphothreonine.

This sequence belongs to the CSN9 family. Component of the CSN complex, composed of COPS1/GPS1, COPS2, COPS3, COPS4, COPS5, COPS6, COPS7 (COPS7A or COPS7B), COPS8 and COPS9. In the complex, it interacts directly with COPS3, COPS5 and COPS6.

It localises to the nucleus. Its subcellular location is the cytoplasm. The protein resides in the nucleoplasm. In terms of biological role, component of the COP9 signalosome complex (CSN), a complex involved in various cellular and developmental processes. The CSN complex is an essential regulator of the ubiquitin (Ubl) conjugation pathway by mediating the deneddylation of the cullin subunits of SCF-type E3 ligase complexes, leading to decrease the Ubl ligase activity of SCF-type complexes such as SCF, CSA or DDB2. The complex is also involved in phosphorylation of p53/TP53, c-jun/JUN, IkappaBalpha/NFKBIA, ITPK1 and IRF8/ICSBP, possibly via its association with CK2 and PKD kinases. CSN-dependent phosphorylation of TP53 and JUN promotes and protects degradation by the Ubl system, respectively. Plays a role in cell proliferation. The protein is COP9 signalosome complex subunit 9 of Mus musculus (Mouse).